Consider the following 420-residue polypeptide: 2,3-dimethylmalate dehydratase large subunit (420 aa).

The [4Fe-4S] cluster site is built by C301, C361, and C364.

The protein belongs to the aconitase/IPM isomerase family. LeuC type 2 subfamily. In terms of assembly, heterodimer of a large and a small subunit. [4Fe-4S] cluster serves as cofactor.

The catalysed reaction is (2R,3S)-2,3-dimethylmalate = dimethylmaleate + H2O. Its pathway is cofactor degradation; nicotinate degradation; propanoate and pyruvate from 6-hydroxynicotinate: step 7/8. The protein is 2,3-dimethylmalate dehydratase large subunit (dmdA) of Eubacterium barkeri (Clostridium barkeri).